The chain runs to 141 residues: Nucleoside diphosphate kinase (141 aa).

ATP is bound by residues lysine 11, phenylalanine 59, arginine 87, threonine 93, arginine 104, and asparagine 114. Histidine 117 serves as the catalytic Pros-phosphohistidine intermediate.

This sequence belongs to the NDK family. As to quaternary structure, homotetramer. Mg(2+) is required as a cofactor.

It is found in the cytoplasm. The enzyme catalyses a 2'-deoxyribonucleoside 5'-diphosphate + ATP = a 2'-deoxyribonucleoside 5'-triphosphate + ADP. The catalysed reaction is a ribonucleoside 5'-diphosphate + ATP = a ribonucleoside 5'-triphosphate + ADP. Major role in the synthesis of nucleoside triphosphates other than ATP. The ATP gamma phosphate is transferred to the NDP beta phosphate via a ping-pong mechanism, using a phosphorylated active-site intermediate. In Yersinia enterocolitica serotype O:8 / biotype 1B (strain NCTC 13174 / 8081), this protein is Nucleoside diphosphate kinase.